Here is a 351-residue protein sequence, read N- to C-terminus: Cyanuric acid amidohydrolase (351 aa).

Positions methionine 1–valine 96 are RU A. Residues arginine 53 and serine 77–glycine 78 each bind substrate. Positions alanine 103 to alanine 240 are RU B. Lysine 153 is a catalytic residue. Substrate-binding positions include arginine 185 and serine 223–serine 224. Serine 223 serves as the catalytic Nucleophile. An RU C region spans residues leucine 246–glutamine 351. Glutamate 283 provides a ligand contact to Mg(2+). Substrate contacts are provided by residues arginine 310 and serine 329 to glycine 330. Positions 332, 335, 336, 337, and 340 each coordinate Mg(2+).

This sequence belongs to the cyclic amide hydrolase (CyAH) family. In terms of assembly, homotetramer.

The enzyme catalyses cyanurate + H2O = 1-carboxybiuret + H(+). It functions in the pathway xenobiotic degradation; atrazine degradation; biuret from cyanurate: step 1/1. Its activity is regulated as follows. Inhibited by barbituric acid. Responsible for the hydrolysis of cyanuric acid, an intermediate formed during catabolism of s-triazine based compounds in herbicides such as atrazine and polymers such as melamine. Catalyzes the hydrolytic opening of the s-triazine ring of cyanuric acid (2,4,6-trihydroxy-s-triazine) to yield carbon dioxide and carboxybiuret, which spontaneously decarboxylates to biuret. The protein is Cyanuric acid amidohydrolase of Rhizobium johnstonii (strain DSM 114642 / LMG 32736 / 3841) (Rhizobium leguminosarum bv. viciae).